The chain runs to 181 residues: Prepronociceptin (181 aa).

The signal sequence occupies residues 1 to 19 (MKILFCDVLLLSLLSSVFS). Positions 20 to 95 (SCPEDCLTCQ…QSKASEMQHL (76 aa)) are excised as a propeptide. The disordered stretch occupies residues 103–125 (SVVQARDAEPEADAEPVADEADE). 2 tandem repeats follow at residues 109 to 114 (DAEPEA) and 115 to 120 (DAEPVA). The segment at 109–120 (DAEPEADAEPVA) is 2 X 6 AA tandem repeats of D-A-E-P-X-A. Residues 112–125 (PEADAEPVADEADE) are compositionally biased toward acidic residues. A propeptide spanning residues 174–181 (TLHQNGNV) is cleaved from the precursor.

The protein belongs to the opioid neuropeptide precursor family. Specific enzymatic cleavages at paired basic residues probably yield other active peptides besides nociceptin. Post-translationally, the N-terminal domain contains 6 conserved cysteines thought to be involved in disulfide bonding and/or processing. As to expression, expressed predominantly in the spinal cord and brain, being more abundant in the hypothalamus and striatum. Also found in small amounts in ovary.

It localises to the secreted. Functionally, ligand of the opioid receptor-like receptor OPRL1. It may act as a transmitter in the brain by modulating nociceptive and locomotor behavior. May be involved in neuronal differentiation and development. Blocks nociceptin action in pain transmission by inhibiting nociceptin-induced hyperalgesia and allodynia. Its function is as follows. Has potent analgesic activity. This Rattus norvegicus (Rat) protein is Prepronociceptin (Pnoc).